We begin with the raw amino-acid sequence, 1430 residues long: DNA-directed RNA polymerase subunit beta' (1430 aa).

Zn(2+)-binding residues include Cys71, Cys73, Cys86, and Cys89. Mg(2+)-binding residues include Asp461, Asp463, and Asp465. 4 residues coordinate Zn(2+): Cys815, Cys889, Cys896, and Cys899. The tract at residues 1388–1430 (RRQEAPAPAATPEQQAEEVFASLGQGEGEGPSPSDEASGPEVE) is disordered. Positions 1392–1405 (APAPAATPEQQAEE) are enriched in low complexity.

Belongs to the RNA polymerase beta' chain family. As to quaternary structure, the RNAP catalytic core consists of 2 alpha, 1 beta, 1 beta' and 1 omega subunit. When a sigma factor is associated with the core the holoenzyme is formed, which can initiate transcription. It depends on Mg(2+) as a cofactor. Zn(2+) is required as a cofactor.

The catalysed reaction is RNA(n) + a ribonucleoside 5'-triphosphate = RNA(n+1) + diphosphate. DNA-dependent RNA polymerase catalyzes the transcription of DNA into RNA using the four ribonucleoside triphosphates as substrates. This Halorhodospira halophila (strain DSM 244 / SL1) (Ectothiorhodospira halophila (strain DSM 244 / SL1)) protein is DNA-directed RNA polymerase subunit beta'.